Reading from the N-terminus, the 236-residue chain is 2,3,4,5-tetrahydropyridine-2,6-dicarboxylate N-acetyltransferase (236 aa).

This sequence belongs to the transferase hexapeptide repeat family. DapH subfamily.

The catalysed reaction is (S)-2,3,4,5-tetrahydrodipicolinate + acetyl-CoA + H2O = L-2-acetamido-6-oxoheptanedioate + CoA. It functions in the pathway amino-acid biosynthesis; L-lysine biosynthesis via DAP pathway; LL-2,6-diaminopimelate from (S)-tetrahydrodipicolinate (acetylase route): step 1/3. Catalyzes the transfer of an acetyl group from acetyl-CoA to tetrahydrodipicolinate. The protein is 2,3,4,5-tetrahydropyridine-2,6-dicarboxylate N-acetyltransferase of Bacillus pumilus (strain SAFR-032).